The following is a 408-amino-acid chain: Peptidase T (408 aa).

Residue histidine 78 participates in Zn(2+) binding. The active site involves aspartate 80. Aspartate 140 lines the Zn(2+) pocket. Catalysis depends on glutamate 173, which acts as the Proton acceptor. The Zn(2+) site is built by glutamate 174, aspartate 196, and histidine 379.

It belongs to the peptidase M20B family. Requires Zn(2+) as cofactor.

It is found in the cytoplasm. It catalyses the reaction Release of the N-terminal residue from a tripeptide.. Its function is as follows. Cleaves the N-terminal amino acid of tripeptides. This chain is Peptidase T, found in Escherichia coli (strain UTI89 / UPEC).